Consider the following 248-residue polypeptide: tRNA (guanine-N(1)-)-methyltransferase (248 aa).

S-adenosyl-L-methionine is bound by residues G113 and 133-138 (IGDFVL).

This sequence belongs to the RNA methyltransferase TrmD family. In terms of assembly, homodimer.

It localises to the cytoplasm. It carries out the reaction guanosine(37) in tRNA + S-adenosyl-L-methionine = N(1)-methylguanosine(37) in tRNA + S-adenosyl-L-homocysteine + H(+). In terms of biological role, specifically methylates guanosine-37 in various tRNAs. This Dehalococcoides mccartyi (strain CBDB1) protein is tRNA (guanine-N(1)-)-methyltransferase.